Here is a 359-residue protein sequence, read N- to C-terminus: sn-1 acyl-lipid omega-3 desaturase (ferredoxin) (359 aa).

A run of 2 helical transmembrane segments spans residues leucine 44 to leucine 64 and tryptophan 67 to valine 87. Residues histidine 89–histidine 93 carry the Histidine box-1 motif. The short motif at histidine 125–histidine 129 is the Histidine box-2 element. The next 3 membrane-spanning stretches (helical) occupy residues alanine 153–phenylalanine 173, leucine 206–leucine 226, and phenylalanine 228–histidine 248. Residues histidine 291 to serine 295 carry the Histidine box-3 motif.

It belongs to the fatty acid desaturase type 2 family. Requires Fe(2+) as cofactor.

The protein resides in the membrane. The catalysed reaction is a 1-[(9Z,12Z)-octadecdienoyl]-2-acyl-glycerolipid + 2 reduced [2Fe-2S]-[ferredoxin] + O2 + 2 H(+) = a 1-[(9Z,12Z,15Z)-octadectrienoyl]-2-acyl-glycerolipid + 2 oxidized [2Fe-2S]-[ferredoxin] + 2 H2O. It carries out the reaction a 1-[(6Z,9Z,12Z)-octadectrienoyl]-2-acyl-glycerolipid + 2 reduced [2Fe-2S]-[ferredoxin] + O2 + 2 H(+) = a 1-[(6Z,9Z,12Z,15Z)-octadectetraenoyl]-2-acyl-glycerolipid + 2 oxidized [2Fe-2S]-[ferredoxin] + 2 H2O. Its pathway is lipid metabolism; polyunsaturated fatty acid biosynthesis. Its function is as follows. Desaturase involved in fatty acid biosynthesis. Introduces a double bond at carbon 15 of linoleoyl and gamma-linolenoyl groups attached to the sn-1 position of the glycerol moiety of membrane glycerolipids. The chain is sn-1 acyl-lipid omega-3 desaturase (ferredoxin) from Synechocystis sp. (strain ATCC 27184 / PCC 6803 / Kazusa).